The chain runs to 1161 residues: MGTAALLILLAGVSWAQREVAIQPGPLYRAEGSQISIWCNVRGYQGPSEQNFLWSIYLPTAPEKEIQIVGTNDPSFSYAIYSQRVRSGGIYVERVSGDRALLHIRQLQDQDTGEYECHTPNTDPSYHGSYSAKVNLQVIPDTLTVSSPAQTIQKVEGGSLQVTCEVSQNSSRHTHLSVSWLRLSEGEATEIISVTQNFSVRPGPSYAQKHSVGDVRLDKVGDSTFRLTLYNLHPSDQGDIYCEGTEWIQDPDGTWFPLTQKRSEGTSVTVLPTDKEFNVRLETERRTYNGGDTATLRCIIEAQNPGDRLFAVSWAFNSSLIASQSPGGVPSLTGEYARREDGGELRVGKDSDSVFSLKIFRLRPEDSGKYNCRVTERERGPSGELIDRESKRPKNIPISVLPLRTSLTVTVTANSSSVLEGVRLSLSCSVASLAGPQSRVSASWHLQDKQGRQRDVVRQDRDGVTWAGEQYRERLGTGGLRLLRSGSDTFSLELEGSQRTDAGSYECRVAEWVPAPDGEWQLLGERSAQANVDILALETGFAVTAITRTPGVTYFDSFDLQCILKPHYPPWVGVSVTWRFQPAGGGDTHDLVTFSRSGGVQWGERAGSFRGRSIVEKGDSTHTVRLSVSRASDSEAGKYQCVAELWRRETSGMWARLAERASNLLEIRVQRPVPRLQVTKVTRTLSVVEGSPVTLSCSIRSQSGPDSRFAVLWLVQQPSGAEGKLIGRSDAGTEFGTYPEGALLKGRLQLGVTAPGQYALTLQGARTDDSGSYYCQVEEWAMDPNQAWYRLAEETSGLTEIRVRPPDANLQLDQLPRNVSALEGQSVTVTCHVLNRTLPDSRLSLEWLCWRAGHMERRGLARLTVDGVLGSVEEEPGDVAPGLPSRVQVSQPSLGLYALTLRGTEVRDSGTYSCLVQEWLRDPRGQWYRRTEERSGATYVSVRQPDPQLQLDPSLLNVSVMEGGHFDLDCMVSSRSRPDSQLAISWSLQGTSRGAEPETLLNVDRSGVWAPLAPRWEGRLQQLQLSPTLFRLHVPRVGPGDSGNYTCLVQEWLLGPRGDWYLLAQDEAVIGWIRVQRKESNLQSTICANDALFYLVFFYPFPIFGILIITILLVRFRHRPTGKPGEGKNGVPLLWIKEPHLNYSPTCLEPPVLSIHPGTID.

The N-terminal stretch at 1–16 (MGTAALLILLAGVSWA) is a signal peptide. Residues 17-1091 (QREVAIQPGP…LQSTICANDA (1075 aa)) are Extracellular-facing. 8 Ig-like C2-type domains span residues 18–135 (REVA…AKVN), 140–258 (PDTL…WFPL), 272–382 (PTDK…RGPS), 402–523 (PLRT…WQLL), 541–651 (FAVT…RETS), 674–796 (PRLQ…EETS), 806–930 (PDAN…WYRR), and 947–1063 (PQLQ…WYLL). Cystine bridges form between Cys39–Cys117 and Cys164–Cys242. Positions 246-248 (EWI) match the EWI motif motif. Cystine bridges form between Cys298-Cys372, Cys428-Cys507, Cys562-Cys641, Cys697-Cys775, Cys831-Cys914, and Cys970-Cys1047. A helical membrane pass occupies residues 1092-1112 (LFYLVFFYPFPIFGILIITIL). At 1113 to 1161 (LVRFRHRPTGKPGEGKNGVPLLWIKEPHLNYSPTCLEPPVLSIHPGTID) the chain is on the cytoplasmic side.

It localises to the membrane. The chain is Immunoglobulin superfamily member 3 (igsf3) from Xenopus tropicalis (Western clawed frog).